The chain runs to 110 residues: Inner membrane protein H108R (110 aa).

Residues L10–L32 traverse the membrane as a helical segment.

The protein belongs to the asfivirus H108R family.

It is found in the virion membrane. The sequence is that of Inner membrane protein H108R from African swine fever virus (isolate Pig/Kenya/KEN-50/1950) (ASFV).